A 232-amino-acid polypeptide reads, in one-letter code: 7-cyano-7-deazaguanine synthase (232 aa).

An ATP-binding site is contributed by 8–18 (FSGGQDSTTCL). The Zn(2+) site is built by Cys-187, Cys-196, Cys-199, and Cys-202.

The protein belongs to the QueC family. Zn(2+) is required as a cofactor.

The enzyme catalyses 7-carboxy-7-deazaguanine + NH4(+) + ATP = 7-cyano-7-deazaguanine + ADP + phosphate + H2O + H(+). Its pathway is purine metabolism; 7-cyano-7-deazaguanine biosynthesis. Its function is as follows. Catalyzes the ATP-dependent conversion of 7-carboxy-7-deazaguanine (CDG) to 7-cyano-7-deazaguanine (preQ(0)). This chain is 7-cyano-7-deazaguanine synthase, found in Vibrio campbellii (strain ATCC BAA-1116).